A 370-amino-acid chain; its full sequence is Putative 8-amino-7-oxononanoate synthase (370 aa).

Arg-20 provides a ligand contact to substrate. Pyridoxal 5'-phosphate is bound at residue 95-96; the sequence is GY. Residue His-120 participates in substrate binding. Pyridoxal 5'-phosphate is bound by residues Ser-167, 192–195, and 223–226; these read DDAH and TLSK. An N6-(pyridoxal phosphate)lysine modification is found at Lys-226. Thr-337 provides a ligand contact to substrate.

The protein belongs to the class-II pyridoxal-phosphate-dependent aminotransferase family. BioF subfamily. In terms of assembly, homodimer. Pyridoxal 5'-phosphate serves as cofactor.

The enzyme catalyses 6-carboxyhexanoyl-[ACP] + L-alanine + H(+) = (8S)-8-amino-7-oxononanoate + holo-[ACP] + CO2. The protein operates within cofactor biosynthesis; biotin biosynthesis. In terms of biological role, catalyzes the decarboxylative condensation of pimeloyl-[acyl-carrier protein] and L-alanine to produce 8-amino-7-oxononanoate (AON), [acyl-carrier protein], and carbon dioxide. The sequence is that of Putative 8-amino-7-oxononanoate synthase (bioF) from Methanococcus vannielii (strain ATCC 35089 / DSM 1224 / JCM 13029 / OCM 148 / SB).